Here is a 621-residue protein sequence, read N- to C-terminus: E3 SUMO-protein ligase PIAS2 (621 aa).

The region spanning 11 to 45 (VSSFRVSELQVLLGFAGRNKSGRKHDLLMRALHLL) is the SAP domain. The LXXLL motif motif lies at 19–23 (LQVLL). Residues Lys-46 and Lys-249 each participate in a glycyl lysine isopeptide (Lys-Gly) (interchain with G-Cter in SUMO2) cross-link. Positions 134–299 (QPSPPIPPVH…SMSVYLVRQL (166 aa)) constitute a PINIT domain. The SP-RING-type zinc-finger motif lies at 331–412 (PDSEIATTSL…FMEILNDCSD (82 aa)). Residues Cys-362, His-364, Cys-385, and Cys-388 each contribute to the Zn(2+) site. Glycyl lysine isopeptide (Lys-Gly) (interchain with G-Cter in SUMO2) cross-links involve residues Lys-430, Lys-435, Lys-443, and Lys-452. An SUMO1-binding region spans residues 467–473 (IDVIDLT). A phosphoserine mark is found at Ser-476, Ser-477, and Ser-478. Residues 484–492 (PPAKRKCIF) carry the Nuclear localization signal motif. A Glycyl lysine isopeptide (Lys-Gly) (interchain with G-Cter in SUMO2) cross-link involves residue Lys-489. Residue Ser-499 is modified to Phosphoserine. Lys-502 is covalently cross-linked (Glycyl lysine isopeptide (Lys-Gly) (interchain with G-Cter in SUMO2)). Residues 577–610 (TASSTSVTTTSPHESSTHVSSSSSRSETGVITSS) show a composition bias toward low complexity. The segment at 577–621 (TASSTSVTTTSPHESSTHVSSSSSRSETGVITSSGRNIPDIISLD) is disordered.

Belongs to the PIAS family. As to quaternary structure, binds SUMO1 and UBE2I. Interacts with AXIN1, JUN, MDM2, PARK7, TP53 and TP73 isoform alpha, but not TP73 isoform beta. Interacts with STAT4 following IL12 and IFN-alpha stimulation of T-cells. Interacts also with GTF2I, GTF2IRD1, IKFZ1, DAB2 and MSX2, as well as with several steroid receptors, including ESR1, ESR2, NR3C1, PGR, AR, and with NCOA2. Sumoylation of a target protein seems to enhance the interaction. Binds to sumoylated ELK1. Interacts with PLAG1. Binds DNA, such as CDKN1A promoter, in a sequence-specific manner. Interacts with KLF8; the interaction results in SUMO ligation and repression of KLF8 transcriptional activity and of its cell cycle progression into G(1) phase. Interacts with IFIH1/MDA5. Interacts with PML. Interacts with PRDM1. Sumoylated.

The protein localises to the nucleus speckle. It is found in the nucleus. Its subcellular location is the PML body. It catalyses the reaction S-ubiquitinyl-[E2 ubiquitin-conjugating enzyme]-L-cysteine + [acceptor protein]-L-lysine = [E2 ubiquitin-conjugating enzyme]-L-cysteine + N(6)-ubiquitinyl-[acceptor protein]-L-lysine.. The protein operates within protein modification; protein sumoylation. Functions as an E3-type small ubiquitin-like modifier (SUMO) ligase, stabilizing the interaction between UBE2I and the substrate, and as a SUMO-tethering factor. Plays a crucial role as a transcriptional coregulation in various cellular pathways, including the STAT pathway, the p53 pathway and the steroid hormone signaling pathway. The effects of this transcriptional coregulation, transactivation or silencing may vary depending upon the biological context and PIAS2 isoform studied. However, it seems to be mostly involved in gene silencing. Binds to sumoylated ELK1 and enhances its transcriptional activity by preventing recruitment of HDAC2 by ELK1, thus reversing SUMO-mediated repression of ELK1 transactivation activity. Isoform PIASx-beta, but not isoform PIASx-alpha, promotes MDM2 sumoylation. Isoform PIASx-alpha promotes PARK7 sumoylation. Isoform PIASx-beta promotes NCOA2 sumoylation more efficiently than isoform PIASx-alpha. Sumoylates PML at'Lys-65' and 'Lys-160'. This Mus musculus (Mouse) protein is E3 SUMO-protein ligase PIAS2 (Pias2).